We begin with the raw amino-acid sequence, 516 residues long: Cytochrome P450 1A1 (516 aa).

Positions 25 to 36 are mitochondrial targeting signal; the sequence is FRPQVPKGLKSP. The O-linked (GlcNAc) serine glycan is linked to serine 63. Phenylalanine 220 contacts substrate. Residue cysteine 453 participates in heme binding.

This sequence belongs to the cytochrome P450 family. In terms of assembly, interacts with cytosolic chaperones HSP70 and HSP90; this interaction is required for initial targeting to mitochondria. Interacts (via mitochondrial targeting signal) with TOMM40 (via N-terminus); this interaction is required for translocation across the mitochondrial outer membrane. Heme is required as a cofactor. As to expression, constitutively expressed in liver.

It localises to the endoplasmic reticulum membrane. It is found in the mitochondrion inner membrane. The protein localises to the microsome membrane. The protein resides in the cytoplasm. It catalyses the reaction an organic molecule + reduced [NADPH--hemoprotein reductase] + O2 = an alcohol + oxidized [NADPH--hemoprotein reductase] + H2O + H(+). The enzyme catalyses estrone + reduced [NADPH--hemoprotein reductase] + O2 = 2-hydroxyestrone + oxidized [NADPH--hemoprotein reductase] + H2O + H(+). It carries out the reaction estrone + reduced [NADPH--hemoprotein reductase] + O2 = 4-hydroxyestrone + oxidized [NADPH--hemoprotein reductase] + H2O + H(+). The catalysed reaction is estrone + reduced [NADPH--hemoprotein reductase] + O2 = 6alpha-hydroxyestrone + oxidized [NADPH--hemoprotein reductase] + H2O + H(+). It catalyses the reaction estrone + reduced [NADPH--hemoprotein reductase] + O2 = 15alpha-hydroxyestrone + oxidized [NADPH--hemoprotein reductase] + H2O + H(+). The enzyme catalyses estrone + reduced [NADPH--hemoprotein reductase] + O2 = 16alpha-hydroxyestrone + oxidized [NADPH--hemoprotein reductase] + H2O + H(+). It carries out the reaction 17beta-estradiol + reduced [NADPH--hemoprotein reductase] + O2 = 2-hydroxy-17beta-estradiol + oxidized [NADPH--hemoprotein reductase] + H2O + H(+). The catalysed reaction is 17beta-estradiol + reduced [NADPH--hemoprotein reductase] + O2 = 4-hydroxy-17beta-estradiol + oxidized [NADPH--hemoprotein reductase] + H2O + H(+). It catalyses the reaction 17beta-estradiol + reduced [NADPH--hemoprotein reductase] + O2 = 6alpha-hydroxy-17beta-estradiol + oxidized [NADPH--hemoprotein reductase] + H2O + H(+). The enzyme catalyses 17beta-estradiol + reduced [NADPH--hemoprotein reductase] + O2 = 7alpha-hydroxy-17beta-estradiol + oxidized [NADPH--hemoprotein reductase] + H2O + H(+). It carries out the reaction 17beta-estradiol + reduced [NADPH--hemoprotein reductase] + O2 = 15alpha-hydroxy-17beta-estradiol + oxidized [NADPH--hemoprotein reductase] + H2O + H(+). The catalysed reaction is (5Z,8Z,11Z)-eicosatrienoate + reduced [NADPH--hemoprotein reductase] + O2 = 19-hydroxy-(5Z,8Z,11Z)-eicosatrienoate + oxidized [NADPH--hemoprotein reductase] + H2O + H(+). It catalyses the reaction (5Z,8Z,11Z,14Z)-eicosatetraenoate + reduced [NADPH--hemoprotein reductase] + O2 = 16-hydroxy-(5Z,8Z,11Z,14Z)-eicosatetraenoate + oxidized [NADPH--hemoprotein reductase] + H2O + H(+). The enzyme catalyses (5Z,8Z,11Z,14Z)-eicosatetraenoate + reduced [NADPH--hemoprotein reductase] + O2 = 17-hydroxy-(5Z,8Z,11Z,14Z)-eicosatetraenoate + oxidized [NADPH--hemoprotein reductase] + H2O + H(+). It carries out the reaction (5Z,8Z,11Z,14Z)-eicosatetraenoate + reduced [NADPH--hemoprotein reductase] + O2 = 18-hydroxy-(5Z,8Z,11Z,14Z)-eicosatetraenoate + oxidized [NADPH--hemoprotein reductase] + H2O + H(+). The catalysed reaction is (5Z,8Z,11Z,14Z)-eicosatetraenoate + reduced [NADPH--hemoprotein reductase] + O2 = 19-hydroxy-(5Z,8Z,11Z,14Z)-eicosatetraenoate + oxidized [NADPH--hemoprotein reductase] + H2O + H(+). It catalyses the reaction (5Z,8Z,11Z,14Z,17Z)-eicosapentaenoate + reduced [NADPH--hemoprotein reductase] + O2 = 19-hydroxy-(5Z,8Z,11Z,14Z,17Z)-eicosapentaenoate + oxidized [NADPH--hemoprotein reductase] + H2O + H(+). The enzyme catalyses (5Z,8Z,11Z,14Z)-eicosatetraenoate + reduced [NADPH--hemoprotein reductase] + O2 = (8R,9S)-epoxy-(5Z,11Z,14Z)-eicosatrienoate + oxidized [NADPH--hemoprotein reductase] + H2O + H(+). It carries out the reaction (5Z,8Z,11Z,14Z)-eicosatetraenoate + reduced [NADPH--hemoprotein reductase] + O2 = (11R,12S)-epoxy-(5Z,8Z,14Z)-eicosatrienoate + oxidized [NADPH--hemoprotein reductase] + H2O + H(+). The catalysed reaction is (5Z,8Z,11Z,14Z)-eicosatetraenoate + reduced [NADPH--hemoprotein reductase] + O2 = (14S,15R)-epoxy-(5Z,8Z,11Z)-eicosatrienoate + oxidized [NADPH--hemoprotein reductase] + H2O + H(+). It catalyses the reaction (5Z,8Z,11Z,14Z)-eicosatetraenoate + reduced [NADPH--hemoprotein reductase] + O2 = (14R,15S)-epoxy-(5Z,8Z,11Z)-eicosatrienoate + oxidized [NADPH--hemoprotein reductase] + H2O + H(+). The enzyme catalyses (5Z,8Z,11Z,14Z,17Z)-eicosapentaenoate + reduced [NADPH--hemoprotein reductase] + O2 = (17R,18S)-epoxy-(5Z,8Z,11Z,14Z)-eicosatetraenoate + oxidized [NADPH--hemoprotein reductase] + H2O + H(+). It carries out the reaction (4Z,7Z,10Z,13Z,16Z,19Z)-docosahexaenoate + reduced [NADPH--hemoprotein reductase] + O2 = (19S,20R)-epoxy-(4Z,7Z,10Z,13Z,16Z)-docosapentaenoate + oxidized [NADPH--hemoprotein reductase] + H2O + H(+). The catalysed reaction is (4Z,7Z,10Z,13Z,16Z,19Z)-docosahexaenoate + reduced [NADPH--hemoprotein reductase] + O2 = (19R,20S)-epoxy-(4Z,7Z,10Z,13Z,16Z)-docosapentaenoate + oxidized [NADPH--hemoprotein reductase] + H2O + H(+). It catalyses the reaction all-trans-retinol + reduced [NADPH--hemoprotein reductase] + O2 = all-trans-retinal + oxidized [NADPH--hemoprotein reductase] + 2 H2O + H(+). The enzyme catalyses all-trans-retinal + reduced [NADPH--hemoprotein reductase] + O2 = all-trans-retinoate + oxidized [NADPH--hemoprotein reductase] + H2O + 2 H(+). It carries out the reaction (13S)-hydroperoxy-(9Z,11E)-octadecadienoate = 13-oxo-(9Z,11E)-octadecadienoate + H2O. The catalysed reaction is (12S)-hydroperoxy-(5Z,8Z,10E,14Z)-eicosatetraenoate = 12-oxo-(5Z,8Z,10E,14Z)-eicosatetraenoate + H2O. It catalyses the reaction (15S)-hydroperoxy-(5Z,8Z,11Z,13E)-eicosatetraenoate = 15-oxo-(5Z,8Z,11Z,13E)-eicosatetraenoate + H2O. The enzyme catalyses (5S)-hydroperoxy-(6E,8Z,11Z,14Z)-eicosatetraenoate = 5-oxo-(6E,8Z,11Z,14Z)-eicosatetraenoate + H2O. Its pathway is steroid hormone biosynthesis. It functions in the pathway lipid metabolism; fatty acid metabolism. It participates in cofactor metabolism; retinol metabolism. A cytochrome P450 monooxygenase involved in the metabolism of various endogenous substrates, including fatty acids, steroid hormones and vitamins. Mechanistically, uses molecular oxygen inserting one oxygen atom into a substrate, and reducing the second into a water molecule, with two electrons provided by NADPH via cytochrome P450 reductase (CPR; NADPH-ferrihemoprotein reductase). Catalyzes the hydroxylation of carbon-hydrogen bonds. Exhibits high catalytic activity for the formation of hydroxyestrogens from estrone (E1) and 17beta-estradiol (E2), namely 2-hydroxy E1 and E2, as well as D-ring hydroxylated E1 and E2 at the C15alpha and C16alpha positions. Displays different regioselectivities for polyunsaturated fatty acids (PUFA) hydroxylation. Catalyzes the epoxidation of double bonds of certain PUFA. Converts arachidonic acid toward epoxyeicosatrienoic acid (EET) regioisomers, 8,9-, 11,12-, and 14,15-EET, that function as lipid mediators in the vascular system. Displays an absolute stereoselectivity in the epoxidation of eicosapentaenoic acid (EPA) producing the 17(R),18(S) enantiomer. May play an important role in all-trans retinoic acid biosynthesis in extrahepatic tissues. Catalyzes two successive oxidative transformation of all-trans retinol to all-trans retinal and then to the active form all-trans retinoic acid. May also participate in eicosanoids metabolism by converting hydroperoxide species into oxo metabolites (lipoxygenase-like reaction, NADPH-independent). The sequence is that of Cytochrome P450 1A1 (CYP1A1) from Cavia porcellus (Guinea pig).